We begin with the raw amino-acid sequence, 313 residues long: Ribosomal RNA small subunit methyltransferase H (313 aa).

S-adenosyl-L-methionine contacts are provided by residues 33–35 (GGH), D53, F80, D102, and Q109. A disordered region spans residues 291–313 (SDEEMRANPRAQSAKLRAAEKIR).

It belongs to the methyltransferase superfamily. RsmH family.

The protein resides in the cytoplasm. The catalysed reaction is cytidine(1402) in 16S rRNA + S-adenosyl-L-methionine = N(4)-methylcytidine(1402) in 16S rRNA + S-adenosyl-L-homocysteine + H(+). In terms of biological role, specifically methylates the N4 position of cytidine in position 1402 (C1402) of 16S rRNA. The chain is Ribosomal RNA small subunit methyltransferase H from Heliobacterium modesticaldum (strain ATCC 51547 / Ice1).